Consider the following 308-residue polypeptide: Ornithine carbamoyltransferase (308 aa).

Carbamoyl phosphate-binding positions include Ser-57–Thr-60, Gln-84, Arg-108, and His-135–Gln-138. L-ornithine is bound by residues Asn-166, Asp-224, and Ser-228 to Met-229. Carbamoyl phosphate-binding positions include Cys-264–Leu-265 and Arg-292.

It belongs to the aspartate/ornithine carbamoyltransferase superfamily. OTCase family.

The protein localises to the cytoplasm. It carries out the reaction carbamoyl phosphate + L-ornithine = L-citrulline + phosphate + H(+). It participates in amino-acid degradation; L-arginine degradation via ADI pathway; carbamoyl phosphate from L-arginine: step 2/2. In terms of biological role, reversibly catalyzes the transfer of the carbamoyl group from carbamoyl phosphate (CP) to the N(epsilon) atom of ornithine (ORN) to produce L-citrulline. In Ralstonia pickettii (strain 12J), this protein is Ornithine carbamoyltransferase.